Consider the following 232-residue polypeptide: Sugar fermentation stimulation protein homolog (232 aa).

The protein belongs to the SfsA family.

This is Sugar fermentation stimulation protein homolog from Pyrobaculum arsenaticum (strain DSM 13514 / JCM 11321 / PZ6).